A 441-amino-acid polypeptide reads, in one-letter code: tRNA pseudouridine synthase Pus10 (441 aa).

The active-site Nucleophile is the aspartate 268. 2 residues coordinate substrate: tyrosine 333 and tyrosine 405.

It belongs to the pseudouridine synthase Pus10 family.

The enzyme catalyses uridine(54) in tRNA = pseudouridine(54) in tRNA. It catalyses the reaction uridine(55) in tRNA = pseudouridine(55) in tRNA. Responsible for synthesis of pseudouridine from uracil-54 and uracil-55 in the psi GC loop of transfer RNAs. The protein is tRNA pseudouridine synthase Pus10 of Thermosphaera aggregans (strain DSM 11486 / M11TL).